We begin with the raw amino-acid sequence, 278 residues long: Putative pyruvate, phosphate dikinase regulatory protein (278 aa).

Position 156 to 163 (156 to 163) interacts with ADP; sequence GVSRTSKT.

It belongs to the pyruvate, phosphate/water dikinase regulatory protein family. PDRP subfamily.

It catalyses the reaction N(tele)-phospho-L-histidyl/L-threonyl-[pyruvate, phosphate dikinase] + ADP = N(tele)-phospho-L-histidyl/O-phospho-L-threonyl-[pyruvate, phosphate dikinase] + AMP + H(+). It carries out the reaction N(tele)-phospho-L-histidyl/O-phospho-L-threonyl-[pyruvate, phosphate dikinase] + phosphate + H(+) = N(tele)-phospho-L-histidyl/L-threonyl-[pyruvate, phosphate dikinase] + diphosphate. Functionally, bifunctional serine/threonine kinase and phosphorylase involved in the regulation of the pyruvate, phosphate dikinase (PPDK) by catalyzing its phosphorylation/dephosphorylation. The polypeptide is Putative pyruvate, phosphate dikinase regulatory protein (Lactobacillus acidophilus (strain ATCC 700396 / NCK56 / N2 / NCFM)).